The following is a 648-amino-acid chain: Phosphomethylpyrimidine synthase (648 aa).

Substrate-binding positions include N236, M265, Y294, H330, 350–352, 391–394, and E430; these read SRG and DGLR. H434 is a Zn(2+) binding site. Y457 contributes to the substrate binding site. H498 provides a ligand contact to Zn(2+). [4Fe-4S] cluster contacts are provided by C578, C581, and C586.

The protein belongs to the ThiC family. Homodimer. [4Fe-4S] cluster is required as a cofactor.

The enzyme catalyses 5-amino-1-(5-phospho-beta-D-ribosyl)imidazole + S-adenosyl-L-methionine = 4-amino-2-methyl-5-(phosphooxymethyl)pyrimidine + CO + 5'-deoxyadenosine + formate + L-methionine + 3 H(+). The protein operates within cofactor biosynthesis; thiamine diphosphate biosynthesis. Catalyzes the synthesis of the hydroxymethylpyrimidine phosphate (HMP-P) moiety of thiamine from aminoimidazole ribotide (AIR) in a radical S-adenosyl-L-methionine (SAM)-dependent reaction. This Aliivibrio salmonicida (strain LFI1238) (Vibrio salmonicida (strain LFI1238)) protein is Phosphomethylpyrimidine synthase.